A 716-amino-acid chain; its full sequence is Putative mannosyltransferase YkcB (716 aa).

Transmembrane regions (helical) follow at residues 8 to 28 (LDIV…YNIW), 44 to 64 (MMQS…FITV), 87 to 107 (SVIL…YLLI), 118 to 135 (IASF…VART), 137 to 157 (NVDA…FKAI), 159 to 179 (KGKL…FNTK), 180 to 200 (MLQA…AANA), and 206 to 226 (IVSL…WPLI). The tract at residues 260-363 (TGQNSGGGQG…GSGMFGTGTP (104 aa)) is disordered. The segment covering 278–289 (EMSSSDNTQAPP) has biased composition (polar residues). The segment covering 290–307 (NQSSSNSSSSDGKSSNGN) has biased composition (low complexity). Residues 318–347 (PSGGQGGPPSGGDGGQGGPGGDGGKGGTGT) show a composition bias toward gly residues. The next 6 helical transmembrane spans lie at 376-396 (QISW…IAGA), 409-429 (TVFW…AEFF), 433-453 (YLIM…VALV), 462-482 (WKAW…LFIL), 491-511 (VGWS…LLLF), and 518-538 (FSYY…MYWA). Positions 664 to 716 (VASEKWQSSSDQKTENTDSADTSSSKASGENGKMGGPGGMNQSATLYELHADE) are disordered. Residues 680 to 694 (TDSADTSSSKASGEN) are compositionally biased toward low complexity.

This sequence belongs to the glycosyltransferase 39 family.

The protein localises to the cell membrane. The chain is Putative mannosyltransferase YkcB (ykcB) from Bacillus subtilis (strain 168).